The primary structure comprises 269 residues: 4-hydroxy-tetrahydrodipicolinate reductase (269 aa).

NAD(+) is bound at residue 9-14 (GVAGRM). R36 provides a ligand contact to NADP(+). Residues 99 to 101 (GTT) and 123 to 126 (APNM) contribute to the NAD(+) site. Residue H156 is the Proton donor/acceptor of the active site. Residue H157 coordinates (S)-2,3,4,5-tetrahydrodipicolinate. The active-site Proton donor is K160. 166-167 (GT) contacts (S)-2,3,4,5-tetrahydrodipicolinate.

The protein belongs to the DapB family.

The protein localises to the cytoplasm. The enzyme catalyses (S)-2,3,4,5-tetrahydrodipicolinate + NAD(+) + H2O = (2S,4S)-4-hydroxy-2,3,4,5-tetrahydrodipicolinate + NADH + H(+). It catalyses the reaction (S)-2,3,4,5-tetrahydrodipicolinate + NADP(+) + H2O = (2S,4S)-4-hydroxy-2,3,4,5-tetrahydrodipicolinate + NADPH + H(+). It participates in amino-acid biosynthesis; L-lysine biosynthesis via DAP pathway; (S)-tetrahydrodipicolinate from L-aspartate: step 4/4. Functionally, catalyzes the conversion of 4-hydroxy-tetrahydrodipicolinate (HTPA) to tetrahydrodipicolinate. This Methylococcus capsulatus (strain ATCC 33009 / NCIMB 11132 / Bath) protein is 4-hydroxy-tetrahydrodipicolinate reductase.